A 599-amino-acid chain; its full sequence is Bile salt-activated lipase (599 aa).

A signal peptide spans 1–20 (MGRLEVLFLGLTCCLAAACA). C84 and C100 are joined by a disulfide. N-linked (GlcNAc...) asparagine glycosylation is present at N207. S214 serves as the catalytic Acyl-ester intermediate. C266 and C277 are oxidised to a cystine. An N-linked (GlcNAc...) asparagine glycan is attached at N325. Catalysis depends on charge relay system residues D340 and H455. The segment at 553-599 (TGDQDTLTPPEDDSEVAPDPPSDDSQVVPVPPTDDSVEAQMPATIGF) is disordered. Repeat copies occupy residues 559 to 569 (LTPPEDDSEVA), 570 to 580 (PDPPSDDSQVV), and 581 to 588 (PVPPTDDS). A 4 X 11 AA tandem repeats, O-glycosylated region region spans residues 559-588 (LTPPEDDSEVAPDPPSDDSQVVPVPPTDDS).

This sequence belongs to the type-B carboxylesterase/lipase family. As to quaternary structure, interacts with CLC. In terms of tissue distribution, EXpressed by eosinophils.

The protein resides in the secreted. The enzyme catalyses a triacylglycerol + H2O = a diacylglycerol + a fatty acid + H(+). The catalysed reaction is 1,2,3-tri-(9Z-octadecenoyl)-glycerol + H2O = di-(9Z)-octadecenoylglycerol + (9Z)-octadecenoate + H(+). It carries out the reaction 1,2,3-trioctanoylglycerol + H2O = dioctanoylglycerol + octanoate + H(+). It catalyses the reaction a sterol ester + H2O = a sterol + a fatty acid + H(+). The enzyme catalyses an acetyl ester + H2O = an aliphatic alcohol + acetate + H(+). The catalysed reaction is a butanoate ester + H2O = an aliphatic alcohol + butanoate + H(+). It carries out the reaction 9-hexadecanoyloxy-octadecanoate + H2O = 9-hydroxy-octadecanoate + hexadecanoate + H(+). It catalyses the reaction 9-(9Z-octadecenoyloxy)-octadecanoate + H2O = 9-hydroxy-octadecanoate + (9Z)-octadecenoate + H(+). The enzyme catalyses cholesteryl (9Z-octadecenoate) + H2O = cholesterol + (9Z)-octadecenoate + H(+). The catalysed reaction is 1-hexadecanoyl-sn-glycero-3-phosphocholine + H2O = sn-glycerol 3-phosphocholine + hexadecanoate + H(+). It carries out the reaction 12-hexadecanoyloxy-octadecanoate + H2O = 12-hydroxyoctadecanoate + hexadecanoate + H(+). It catalyses the reaction 12-(9Z-octadecenoyloxy)-octadecanoate + H2O = 12-hydroxyoctadecanoate + (9Z)-octadecenoate + H(+). The enzyme catalyses 13-(9Z-octadecenoyloxy)-octadecanoate + H2O = 13-hydroxy-octadecanoate + (9Z)-octadecenoate + H(+). The catalysed reaction is 9-(9Z-hexadecenoyloxy)-octadecanoate + H2O = (9Z)-hexadecenoate + 9-hydroxy-octadecanoate + H(+). It carries out the reaction 12-(9Z-hexadecenoyloxy)-octadecanoate + H2O = 12-hydroxyoctadecanoate + (9Z)-hexadecenoate + H(+). It catalyses the reaction 13-(9Z-hexadecenoyloxy)-octadecanoate + H2O = 13-hydroxy-octadecanoate + (9Z)-hexadecenoate + H(+). The enzyme catalyses 12-octadecanoyloxy-octadecanoate + H2O = 12-hydroxyoctadecanoate + octadecanoate + H(+). The catalysed reaction is 13-octadecanoyloxy-octadecanoate + H2O = 13-hydroxy-octadecanoate + octadecanoate + H(+). It carries out the reaction 5-(9Z-hexadecenoyloxy)-octadecanoate + H2O = 5-hydroxy-octadecanoate + (9Z)-hexadecenoate + H(+). It catalyses the reaction 9-octadecanoyloxy-octadecanoate + H2O = 9-hydroxy-octadecanoate + octadecanoate + H(+). Its activity is regulated as follows. Activated by bile salts such as sodium taurocholate. Catalyzes the hydrolysis of a wide range of substrates including cholesteryl esters, phospholipids, lysophospholipids, di- and tri-acylglycerols, and fatty acid esters of hydroxy fatty acids (FAHFAs). Preferentially hydrolyzes FAHFAs with the ester bond further away from the carboxylate. Unsaturated FAHFAs are hydrolyzed more quickly than saturated FAHFAs. Has an essential role in the complete digestion of dietary lipids and their intestinal absorption, along with the absorption of fat-soluble vitamins. The sequence is that of Bile salt-activated lipase (Cel) from Mus musculus (Mouse).